The chain runs to 405 residues: Splicing factor 45 (405 aa).

Ser-2 is modified (N-acetylserine). Ser-2 carries the post-translational modification Phosphoserine. Residue Lys-15 forms a Glycyl lysine isopeptide (Lys-Gly) (interchain with G-Cter in SUMO2) linkage. An N6-acetyllysine modification is found at Lys-21. Residues Lys-24 and Lys-33 each participate in a glycyl lysine isopeptide (Lys-Gly) (interchain with G-Cter in SUMO2) cross-link. Lys-41 is subject to N6-acetyllysine; alternate. Lys-41 participates in a covalent cross-link: Glycyl lysine isopeptide (Lys-Gly) (interchain with G-Cter in SUMO2); alternate. The span at 57 to 68 shows a compositional bias: basic and acidic residues; that stretch reads LKRGGSSDDRQI. Disordered regions lie at residues 57 to 88 and 114 to 233; these read LKRG…SGFS and RQRE…FLAN. Residue Lys-58 forms a Glycyl lysine isopeptide (Lys-Gly) (interchain with G-Cter in SUMO2) linkage. Position 71 is a phosphothreonine (Thr-71). The span at 114–153 shows a compositional bias: basic and acidic residues; sequence RQREERQRQRELERQKEIEEREKRRKDRHEASGFSRRPDP. A phosphoserine mark is found at Ser-155 and Ser-169. Residues 182–200 show a composition bias toward basic and acidic residues; that stretch reads VEKDKELPRDFPYEEDSRP. Ser-222 is subject to Phosphoserine. Residues 235–283 enclose the G-patch domain; that stretch reads GGTVAHKIMQKYGFREGQGLGKHEQGLSTALSVEKTSKRGGKIIVGDAT. Thr-237 carries the phosphothreonine modification. A Glycyl lysine isopeptide (Lys-Gly) (interchain with G-Cter in SUMO2) cross-link involves residue Lys-256. At Ser-266 the chain carries Phosphoserine. Lys-276 is covalently cross-linked (Glycyl lysine isopeptide (Lys-Gly) (interchain with G-Cter in SUMO2)). Residues Ser-295 and Ser-297 each carry the phosphoserine modification. The 80-residue stretch at 310–389 folds into the RRM domain; it reads VVLLRNMVGA…YFGGRVVKAC (80 aa).

In terms of assembly, binds SXL. Associates with the spliceosome. Interacts with SF3B1, SF1 and U2AF2.

It is found in the nucleus. In terms of biological role, splice factor that binds to the single-stranded 3'AG at the exon/intron border and promotes its utilization in the second catalytic step. Involved in the regulation of alternative splicing and the utilization of cryptic splice sites. In Mus musculus (Mouse), this protein is Splicing factor 45 (Rbm17).